Reading from the N-terminus, the 450-residue chain is Chromosomal replication initiator protein DnaA (450 aa).

A domain I, interacts with DnaA modulators region spans residues 1–79 (MENIHDLWNR…TGEELLIKFI (79 aa)). Positions 79 to 111 (ITPPNQSEDDFEFQRSSKKHRKPYEESTDFPQS) are domain II. The interval 112–328 (MLNPKYTFDT…GALIRVVAYS (217 aa)) is domain III, AAA+ region. 4 residues coordinate ATP: G156, G158, K159, and T160. Residues 329 to 450 (SLINKEITAD…KEIEEKLKQL (122 aa)) are domain IV, binds dsDNA.

It belongs to the DnaA family. In terms of assembly, oligomerizes as a right-handed, spiral filament on DNA at oriC.

It is found in the cytoplasm. Plays an essential role in the initiation and regulation of chromosomal replication. ATP-DnaA binds to the origin of replication (oriC) to initiate formation of the DNA replication initiation complex once per cell cycle. Binds the DnaA box (a 9 base pair repeat at the origin) and separates the double-stranded (ds)DNA. Forms a right-handed helical filament on oriC DNA; dsDNA binds to the exterior of the filament while single-stranded (ss)DNA is stabiized in the filament's interior. The ATP-DnaA-oriC complex binds and stabilizes one strand of the AT-rich DNA unwinding element (DUE), permitting loading of DNA polymerase. After initiation quickly degrades to an ADP-DnaA complex that is not apt for DNA replication. Binds acidic phospholipids. The protein is Chromosomal replication initiator protein DnaA of Geobacillus sp. (strain WCH70).